Here is a 93-residue protein sequence, read N- to C-terminus: Large ribosomal subunit protein bL31B (93 aa).

Belongs to the bacterial ribosomal protein bL31 family. Type B subfamily. As to quaternary structure, part of the 50S ribosomal subunit.

The protein is Large ribosomal subunit protein bL31B of Pseudomonas syringae pv. syringae (strain B728a).